Consider the following 736-residue polypeptide: MTDTLFDRADIDALLAGRHPDPFACLGPHRHDDQIVVRALLPGAERVRALSPDGAELGTLACVDRAGCFAGTIAHDGGAPHYLLSIDWPDAHQVTDDAYAFGTLLDEAALARFSAGDPEAVLDCLGATPVRIDDTDGVRFAVWAPSAQRVSVVGDFNAWDGRRHPMRLRRPSGVWELFVPGIGAGERYKYELCAADGRVLPHKADPCARATEAPPRTASVVADVAALHAFAWHDDGWMHARPRHDDRYRVPWSIYEVHPESWQRIPEQMDRSATWDELAERLIPYVKGMGFTHVEFMPIAEYPFGGSWGYQPLAQFAPSARFGPVEGFARFVDRAHAAGIGVLVDWVPAHFPNDAHGLAQFDGSALYEHADPREGMHPDWNTCVFNVGRTEVSAFLVASALAWARRYHVDGIRVDAVASMLYRDYSRKEGEWVPNVYGGRENLESVAFLRRLNDTLHGDAAPAGVVTVAEESTAWPGVTAPTADGGLGFDFKWNMGWMHDTLAYLHEDPIHRRYHHDRMTFGLVYAFSERFVLPLSHDEVVHGKGSLVAKMPGDAWQRLATLRAYFGFMWAHPGKKLLFMGSEFAQWSEFAHDATPHWDLLDAPAHRGVQRLVRDLNRAYAAEPALHALDCHAAGFAWLIGDDRDNSVFAFARRDDTGRLVVAVCNFTPVPRAGYRLGLPAPGHWRELMNTDAASYGGTNAGNDGAVWAEAVPAHGEAWSASLRLPPLATLWLTPA.

The active-site Nucleophile is aspartate 415. Residue glutamate 470 is the Proton donor of the active site.

The protein belongs to the glycosyl hydrolase 13 family. GlgB subfamily. Monomer.

The enzyme catalyses Transfers a segment of a (1-&gt;4)-alpha-D-glucan chain to a primary hydroxy group in a similar glucan chain.. Its pathway is glycan biosynthesis; glycogen biosynthesis. Catalyzes the formation of the alpha-1,6-glucosidic linkages in glycogen by scission of a 1,4-alpha-linked oligosaccharide from growing alpha-1,4-glucan chains and the subsequent attachment of the oligosaccharide to the alpha-1,6 position. In Burkholderia cenocepacia (strain HI2424), this protein is 1,4-alpha-glucan branching enzyme GlgB.